Here is a 308-residue protein sequence, read N- to C-terminus: GATA transcription factor 9 (308 aa).

Residues 34-57 form a disordered region; it reads DDGLNTLPDSSTLSTGTLTDSSNS. Over residues 39 to 57 the composition is skewed to low complexity; sequence TLPDSSTLSTGTLTDSSNS. The short motif at 142 to 149 is the Nuclear localization signal element; sequence KARSKRSR. The GATA-type zinc finger occupies 193-247; sequence SGGGRRCLHCATEKTPQWRTGPMGPKTLCNACGVRYKSGRLVPEYRPASSPTFVM.

Belongs to the type IV zinc-finger family. Class A subfamily.

It is found in the nucleus. Functionally, transcriptional activator that specifically binds 5'-GATA-3' or 5'-GAT-3' motifs within gene promoters. May be involved in the regulation of some light-responsive genes. This is GATA transcription factor 9 (GATA9) from Arabidopsis thaliana (Mouse-ear cress).